Consider the following 341-residue polypeptide: GTPase Obg (341 aa).

The 159-residue stretch at 1 to 159 (MKFLDQAKVY…RTLWLRLKLI (159 aa)) folds into the Obg domain. The region spanning 160–327 (ADAGLIGLPN…MLRAGAHMIE (168 aa)) is the OBG-type G domain. GTP is bound by residues 166 to 173 (GLPNAGKS), 191 to 195 (FTTLY), 212 to 215 (DIPG), 279 to 282 (SQID), and 308 to 310 (SAV). Mg(2+) contacts are provided by Ser-173 and Thr-193.

Belongs to the TRAFAC class OBG-HflX-like GTPase superfamily. OBG GTPase family. In terms of assembly, monomer. Mg(2+) serves as cofactor.

It is found in the cytoplasm. Functionally, an essential GTPase which binds GTP, GDP and possibly (p)ppGpp with moderate affinity, with high nucleotide exchange rates and a fairly low GTP hydrolysis rate. Plays a role in control of the cell cycle, stress response, ribosome biogenesis and in those bacteria that undergo differentiation, in morphogenesis control. The polypeptide is GTPase Obg (Bartonella quintana (strain Toulouse) (Rochalimaea quintana)).